The following is a 477-amino-acid chain: UTP--glucose-1-phosphate uridylyltransferase (477 aa).

Alanine 2 bears the N-acetylalanine mark. UTP is bound by residues leucine 92–glycine 95, lysine 106, glutamine 169, and glycine 198. Residue glycine 94–glycine 95 participates in substrate binding. Substrate-binding positions include histidine 199 and asparagine 227–aspartate 229. UTP is bound by residues aspartate 229 and lysine 367.

This sequence belongs to the UDPGP type 1 family. As to quaternary structure, monomer. It depends on Mg(2+) as a cofactor.

It localises to the cytoplasm. The catalysed reaction is alpha-D-glucose 1-phosphate + UTP + H(+) = UDP-alpha-D-glucose + diphosphate. Its activity is regulated as follows. Inhibition by uncomplexed, free UTP. Plays a central role as a glucosyl donor in cellular metabolic pathways. The polypeptide is UTP--glucose-1-phosphate uridylyltransferase (Solanum tuberosum (Potato)).